Reading from the N-terminus, the 225-residue chain is UPF0758 protein BCE33L4198 (225 aa).

The 123-residue stretch at 103–225 folds into the MPN domain; that stretch reads SIRNPEDCAR…FVSLKEKGHI (123 aa). Zn(2+) is bound by residues histidine 174, histidine 176, and aspartate 187. Positions 174–187 match the JAMM motif motif; that stretch reads HNHPSGDPAPSRED.

This sequence belongs to the UPF0758 family.

The polypeptide is UPF0758 protein BCE33L4198 (Bacillus cereus (strain ZK / E33L)).